The following is a 130-amino-acid chain: Ribonuclease VapC4 (130 aa).

The region spanning 7 to 130 (LADTSVFIGI…AMPDVEVITI (124 aa)) is the PINc domain. Positions 9 and 98 each coordinate Mg(2+).

Belongs to the PINc/VapC protein family. Interacts with cognate antitoxin VapB4. It depends on Mg(2+) as a cofactor.

It localises to the secreted. Its function is as follows. Toxic component of a type II toxin-antitoxin (TA) system. Probably exerts its toxic effect by binding to mRNA, inhibiting translation. Binds to, recognizes and cleaves ssRNA at ACGC and AC(A/U)GC sequences, usually between the G and C; cleavage is not very efficient, nor is cleavage required to inhibit protein synthesis. Upon expression in situ, in M.smegmatis or E.coli inhibits cell growth and colony formation; in at least E.coli also causes increased levels of cellular RNA. Its toxic effect is neutralized by coexpression with cognate antitoxin VapB4. The sequence is that of Ribonuclease VapC4 from Mycobacterium tuberculosis (strain ATCC 25618 / H37Rv).